The sequence spans 148 residues: FAD synthase (148 aa).

ATP-binding positions include 11 to 12 (TF), 16 to 19 (HPGH), Asn94, and Tyr121.

It belongs to the archaeal FAD synthase family. Homodimer. It depends on a divalent metal cation as a cofactor.

The catalysed reaction is FMN + ATP + H(+) = FAD + diphosphate. Its pathway is cofactor biosynthesis; FAD biosynthesis; FAD from FMN: step 1/1. Catalyzes the transfer of the AMP portion of ATP to flavin mononucleotide (FMN) to produce flavin adenine dinucleotide (FAD) coenzyme. In Methanoregula boonei (strain DSM 21154 / JCM 14090 / 6A8), this protein is FAD synthase.